A 308-amino-acid polypeptide reads, in one-letter code: Transcription factor JunB (308 aa).

The basic motif stretch occupies residues 229–256 (RIKAERKRLRNRLAATKCRKRKLERISR). The region spanning 229–292 (RIKAERKRLR…AQLKQKVLRH (64 aa)) is the bZIP domain. Positions 257–285 (LEEKVKVLKNDNAGLSNTASVLRDQVAQL) are leucine-zipper.

Belongs to the bZIP family. Jun subfamily. As to quaternary structure, binds DNA as a homodimer or as a heterodimer with another member of the jun/fos family.

The protein resides in the nucleus. Functionally, transcription factor involved in regulating gene activity following the primary growth factor response. Binds to the DNA sequence 5'-TGA[CG]TCA-3'. This chain is Transcription factor JunB (junb), found in Cyprinus carpio (Common carp).